A 76-amino-acid chain; its full sequence is UPF0235 protein MRA_1997 (76 aa).

Belongs to the UPF0235 family.

This Mycobacterium tuberculosis (strain ATCC 25177 / H37Ra) protein is UPF0235 protein MRA_1997.